The chain runs to 380 residues: Chaperone protein DnaJ (380 aa).

The tract at residues 1-48 is disordered; that stretch reads MAKKDYYDTLGVPKNASDDDIKKAYRKLAMKHHPDRNQGDKSKVSEEK. One can recognise a J domain in the interval 5–72; it reads DYYDTLGVPK…NKRMAYDQYG (68 aa). The span at 24-34 shows a compositional bias: basic residues; that stretch reads AYRKLAMKHHP. Residues 35–48 show a composition bias toward basic and acidic residues; it reads DRNQGDKSKVSEEK. A CR-type zinc finger spans residues 139–217; sequence GKEAQIRIPS…CHGVGKTKNN (79 aa). Residues cysteine 152, cysteine 155, cysteine 169, cysteine 172, cysteine 191, cysteine 194, cysteine 205, and cysteine 208 each coordinate Zn(2+). CXXCXGXG motif repeat units follow at residues 152 to 159, 169 to 176, 191 to 198, and 205 to 212; these read CNTCHGSG, CTTCHGHG, CPQCKGTG, and CVACHGVG. Residues 357–380 form a disordered region; it reads KKGGARHSPSEEGWADKLKSFFSA. Over residues 364–380 the composition is skewed to basic and acidic residues; that stretch reads SPSEEGWADKLKSFFSA.

It belongs to the DnaJ family. Homodimer. Zn(2+) serves as cofactor.

The protein resides in the cytoplasm. In terms of biological role, participates actively in the response to hyperosmotic and heat shock by preventing the aggregation of stress-denatured proteins and by disaggregating proteins, also in an autonomous, DnaK-independent fashion. Unfolded proteins bind initially to DnaJ; upon interaction with the DnaJ-bound protein, DnaK hydrolyzes its bound ATP, resulting in the formation of a stable complex. GrpE releases ADP from DnaK; ATP binding to DnaK triggers the release of the substrate protein, thus completing the reaction cycle. Several rounds of ATP-dependent interactions between DnaJ, DnaK and GrpE are required for fully efficient folding. Also involved, together with DnaK and GrpE, in the DNA replication of plasmids through activation of initiation proteins. The protein is Chaperone protein DnaJ of Polaromonas sp. (strain JS666 / ATCC BAA-500).